Consider the following 192-residue polypeptide: UPF0312 protein Pput_4854 (192 aa).

Residues 1-23 (MLKKTFAALALGTALLSAGQAMA) form the signal peptide.

The protein belongs to the UPF0312 family. Type 1 subfamily.

It is found in the periplasm. The protein is UPF0312 protein Pput_4854 of Pseudomonas putida (strain ATCC 700007 / DSM 6899 / JCM 31910 / BCRC 17059 / LMG 24140 / F1).